The following is a 205-amino-acid chain: Outer-membrane lipoprotein carrier protein (205 aa).

An N-terminal signal peptide occupies residues 1-21 (MKKIVLLVTLVFSINYSFANA).

Belongs to the LolA family. Monomer.

Its subcellular location is the periplasm. Functionally, participates in the translocation of lipoproteins from the inner membrane to the outer membrane. Only forms a complex with a lipoprotein if the residue after the N-terminal Cys is not an aspartate (The Asp acts as a targeting signal to indicate that the lipoprotein should stay in the inner membrane). The protein is Outer-membrane lipoprotein carrier protein of Francisella philomiragia subsp. philomiragia (strain ATCC 25017 / CCUG 19701 / FSC 153 / O#319-036).